The chain runs to 140 residues: Lysozyme c-1 (140 aa).

The signal sequence occupies residues 1-20 (MKVFSTVLLAIVACCAVAEA). One can recognise a C-type lysozyme domain in the interval 21 to 140 (KTFGKCELAK…KKLPNVSSCF (120 aa)). 4 cysteine pairs are disulfide-bonded: Cys-26/Cys-139, Cys-47/Cys-128, Cys-81/Cys-94, and Cys-90/Cys-108. Residues Glu-52 and Asp-69 contribute to the active site.

It belongs to the glycosyl hydrolase 22 family. In terms of tissue distribution, expressed in salivary glands and Malpighian tubules.

The catalysed reaction is Hydrolysis of (1-&gt;4)-beta-linkages between N-acetylmuramic acid and N-acetyl-D-glucosamine residues in a peptidoglycan and between N-acetyl-D-glucosamine residues in chitodextrins.. Its function is as follows. Lysozymes have primarily a bacteriolytic function; those in tissues and body fluids are associated with the monocyte-macrophage system and enhance the activity of immunoagents. The polypeptide is Lysozyme c-1 (Anopheles gambiae (African malaria mosquito)).